Here is a 489-residue protein sequence, read N- to C-terminus: MESISMMGSPKSLETFLPNGINGIKDARQVTVGVIGSGDFAKSLTIRLIRCGYHVVIGSRNPKFASEFFPHVVDVTHHEDALTKTNIIFVAIHREHYTSLWDLRHLLVGKILIDVSNNMRVNQYPESNAEYLASLFPDSLIVKGFNVISAWALQLGPKDASRQVYICSNNIQARQQVIELARQLNFIPVDLGSLSSAKEIENLPLRLFTLWRGPVVVAISLATFFFLYSFVRDVIHPYARNQQSDFYKIPIEIVNKTLPIVAITLLSLVYLAGLLAAAYQLYYGTKYRRFPPWLDTWLQCRKQLGLLSFFFAVVHVAYSLCLPMRRSERYLFLNMAYQQVHANIENAWNEEEVWRIEMYISFGIMSLGLLSLLAVTSIPSVSNALNWREFSFIQSTLGYVALLITTFHVLIYGWKRAFAEEYYRFYTPPNFVLALVLPSIVILGKMILLLPCISRKLKRIKKGWEKSQFLDEGMGGAVPHLSPERVTVM.

Residues 37 to 40 (SGDF), 59 to 60 (SR), 92 to 99 (IHREHYTS), Asn117, and Ala150 contribute to the NADP(+) site. Trp151 and Asp159 together coordinate FAD. Residues 207 to 227 (LFTLWRGPVVVAISLATFFFL) traverse the membrane as a helical segment. Tyr228 provides a ligand contact to Fe(3+). Residues 258–278 (LPIVAITLLSLVYLAGLLAAA) form a helical membrane-spanning segment. The Ferric oxidoreductase domain occupies 258–406 (LPIVAITLLS…LGYVALLITT (149 aa)). Positions 280 and 301 each coordinate FAD. Helical transmembrane passes span 304–324 (LGLL…CLPM), 358–378 (MYIS…VTSI), 392–412 (FIQS…VLIY), and 431–451 (FVLA…LLLP). His315 contacts heme b. Fe(3+) is bound at residue Tyr318. 2 residues coordinate FAD: Ser377 and Gln394. Heme b is bound at residue His408. The residue at position 482 (Ser482) is a Phosphoserine.

It belongs to the STEAP family. FAD is required as a cofactor. The cofactor is heme b.

The protein localises to the cell membrane. It localises to the endosome membrane. It carries out the reaction 2 Fe(2+) + NADP(+) + H(+) = 2 Fe(3+) + NADPH. The enzyme catalyses 2 Cu(+) + NADP(+) + H(+) = 2 Cu(2+) + NADPH. Its function is as follows. Integral membrane protein that functions as a NADPH-dependent ferric-chelate reductase, using NADPH from one side of the membrane to reduce a Fe(3+) chelate that is bound on the other side of the membrane. Mediates sequential transmembrane electron transfer from NADPH to FAD and onto heme, and finally to the Fe(3+) chelate. Can also reduce Cu(2+) to Cu(1+). The sequence is that of Metalloreductase STEAP2 (Steap2) from Mus musculus (Mouse).